The primary structure comprises 126 residues: Anti-adapter protein IraD (126 aa).

This sequence belongs to the GpW/Gp25 family. IraD subfamily. As to quaternary structure, interacts with RssB.

It is found in the cytoplasm. Inhibits RpoS proteolysis by regulating RssB activity, thereby increasing the stability of the sigma stress factor RpoS during oxidative stress. Its effect on RpoS stability is due to its interaction with RssB, which probably blocks the interaction of RssB with RpoS, and the consequent delivery of the RssB-RpoS complex to the ClpXP protein degradation pathway. The sequence is that of Anti-adapter protein IraD from Salmonella paratyphi A (strain ATCC 9150 / SARB42).